Here is a 101-residue protein sequence, read N- to C-terminus: MGSRCAKLSTGHGPAQNTGHSRGHESSMKKLVACVSQDNFSLSSEGEEEEEDEEEEEEEEEEEEEEQIPVKGKLLLLEPEKQESAEDGEAQPSPEPKQTHS.

Positions Met-1–Ser-101 are disordered. Over residues Glu-45 to Gln-67 the composition is skewed to acidic residues. Residue Ser-93 is modified to Phosphoserine.

Belongs to the protamine P3 family. Testis.

The protein resides in the nucleus. Its subcellular location is the chromosome. Its function is as follows. Protamines substitute for histones in the chromatin of sperm during the haploid phase of spermatogenesis. They compact sperm DNA into a highly condensed, stable and inactive complex. The polypeptide is Protamine-3 (Prm3) (Mus musculus (Mouse)).